The sequence spans 95 residues: Aspartyl/glutamyl-tRNA(Asn/Gln) amidotransferase subunit C (95 aa).

The protein belongs to the GatC family. Heterotrimer of A, B and C subunits.

It catalyses the reaction L-glutamyl-tRNA(Gln) + L-glutamine + ATP + H2O = L-glutaminyl-tRNA(Gln) + L-glutamate + ADP + phosphate + H(+). The enzyme catalyses L-aspartyl-tRNA(Asn) + L-glutamine + ATP + H2O = L-asparaginyl-tRNA(Asn) + L-glutamate + ADP + phosphate + 2 H(+). Functionally, allows the formation of correctly charged Asn-tRNA(Asn) or Gln-tRNA(Gln) through the transamidation of misacylated Asp-tRNA(Asn) or Glu-tRNA(Gln) in organisms which lack either or both of asparaginyl-tRNA or glutaminyl-tRNA synthetases. The reaction takes place in the presence of glutamine and ATP through an activated phospho-Asp-tRNA(Asn) or phospho-Glu-tRNA(Gln). In Ectopseudomonas mendocina (strain ymp) (Pseudomonas mendocina), this protein is Aspartyl/glutamyl-tRNA(Asn/Gln) amidotransferase subunit C.